We begin with the raw amino-acid sequence, 97 residues long: Aspartyl/glutamyl-tRNA(Asn/Gln) amidotransferase subunit C (97 aa).

The protein belongs to the GatC family. In terms of assembly, heterotrimer of A, B and C subunits.

The catalysed reaction is L-glutamyl-tRNA(Gln) + L-glutamine + ATP + H2O = L-glutaminyl-tRNA(Gln) + L-glutamate + ADP + phosphate + H(+). It catalyses the reaction L-aspartyl-tRNA(Asn) + L-glutamine + ATP + H2O = L-asparaginyl-tRNA(Asn) + L-glutamate + ADP + phosphate + 2 H(+). Its function is as follows. Allows the formation of correctly charged Asn-tRNA(Asn) or Gln-tRNA(Gln) through the transamidation of misacylated Asp-tRNA(Asn) or Glu-tRNA(Gln) in organisms which lack either or both of asparaginyl-tRNA or glutaminyl-tRNA synthetases. The reaction takes place in the presence of glutamine and ATP through an activated phospho-Asp-tRNA(Asn) or phospho-Glu-tRNA(Gln). The chain is Aspartyl/glutamyl-tRNA(Asn/Gln) amidotransferase subunit C from Clostridium botulinum (strain Eklund 17B / Type B).